A 515-amino-acid polypeptide reads, in one-letter code: 1-pyrroline-5-carboxylate dehydrogenase (515 aa).

Catalysis depends on residues E286 and C320.

The protein belongs to the aldehyde dehydrogenase family. RocA subfamily.

The catalysed reaction is L-glutamate 5-semialdehyde + NAD(+) + H2O = L-glutamate + NADH + 2 H(+). The protein operates within amino-acid degradation; L-proline degradation into L-glutamate; L-glutamate from L-proline: step 2/2. The chain is 1-pyrroline-5-carboxylate dehydrogenase from Bacillus cereus (strain B4264).